The following is a 243-amino-acid chain: Ubiquinone/menaquinone biosynthesis C-methyltransferase UbiE (243 aa).

S-adenosyl-L-methionine is bound by residues Thr69, Asp90, and 116-117; that span reads DA.

Belongs to the class I-like SAM-binding methyltransferase superfamily. MenG/UbiE family.

It catalyses the reaction a 2-demethylmenaquinol + S-adenosyl-L-methionine = a menaquinol + S-adenosyl-L-homocysteine + H(+). The catalysed reaction is a 2-methoxy-6-(all-trans-polyprenyl)benzene-1,4-diol + S-adenosyl-L-methionine = a 5-methoxy-2-methyl-3-(all-trans-polyprenyl)benzene-1,4-diol + S-adenosyl-L-homocysteine + H(+). It functions in the pathway quinol/quinone metabolism; menaquinone biosynthesis; menaquinol from 1,4-dihydroxy-2-naphthoate: step 2/2. The protein operates within cofactor biosynthesis; ubiquinone biosynthesis. Functionally, methyltransferase required for the conversion of demethylmenaquinol (DMKH2) to menaquinol (MKH2) and the conversion of 2-polyprenyl-6-methoxy-1,4-benzoquinol (DDMQH2) to 2-polyprenyl-3-methyl-6-methoxy-1,4-benzoquinol (DMQH2). The chain is Ubiquinone/menaquinone biosynthesis C-methyltransferase UbiE from Cupriavidus taiwanensis (strain DSM 17343 / BCRC 17206 / CCUG 44338 / CIP 107171 / LMG 19424 / R1) (Ralstonia taiwanensis (strain LMG 19424)).